The sequence spans 276 residues: Type III pantothenate kinase (276 aa).

18–25 (EIGNSRLH) contributes to the ATP binding site. Substrate is bound by residues Tyr-116 and 120-123 (GIDR). The active-site Proton acceptor is the Asp-122. Asp-142 is a binding site for K(+). Thr-145 serves as a coordination point for ATP. Residue Thr-200 coordinates substrate.

It belongs to the type III pantothenate kinase family. In terms of assembly, homodimer. The cofactor is NH4(+). It depends on K(+) as a cofactor.

It is found in the cytoplasm. It carries out the reaction (R)-pantothenate + ATP = (R)-4'-phosphopantothenate + ADP + H(+). It functions in the pathway cofactor biosynthesis; coenzyme A biosynthesis; CoA from (R)-pantothenate: step 1/5. Catalyzes the phosphorylation of pantothenate (Pan), the first step in CoA biosynthesis. This Nostoc sp. (strain PCC 7120 / SAG 25.82 / UTEX 2576) protein is Type III pantothenate kinase.